Here is a 79-residue protein sequence, read N- to C-terminus: MDNIEQRVKKIVAEQLGVAEADIKNESSFVNDLGADSLDTVELVMALEDEFGMEIPDEEAEKITTVQQAIDYATAHVKA.

The 76-residue stretch at 2–77 folds into the Carrier domain; that stretch reads DNIEQRVKKI…QAIDYATAHV (76 aa). S37 is subject to O-(pantetheine 4'-phosphoryl)serine.

The protein belongs to the acyl carrier protein (ACP) family. Post-translationally, 4'-phosphopantetheine is transferred from CoA to a specific serine of apo-ACP by AcpS. This modification is essential for activity because fatty acids are bound in thioester linkage to the sulfhydryl of the prosthetic group.

It localises to the cytoplasm. The protein operates within lipid metabolism; fatty acid biosynthesis. In terms of biological role, carrier of the growing fatty acid chain in fatty acid biosynthesis. The protein is Acyl carrier protein of Cupriavidus pinatubonensis (strain JMP 134 / LMG 1197) (Cupriavidus necator (strain JMP 134)).